We begin with the raw amino-acid sequence, 206 residues long: Pyridoxine/pyridoxamine 5'-phosphate oxidase (206 aa).

Residues arginine 54 to lysine 59, tyrosine 69 to threonine 70, arginine 75, lysine 76, and glutamine 98 contribute to the FMN site. Lysine 59 serves as a coordination point for substrate. Substrate-binding residues include tyrosine 116, arginine 120, and serine 124. FMN-binding positions include glutamine 133 to serine 134 and tryptophan 178. Arginine 184 to histidine 186 is a binding site for substrate. An FMN-binding site is contributed by arginine 188.

Belongs to the pyridoxamine 5'-phosphate oxidase family. In terms of assembly, homodimer. Requires FMN as cofactor.

It carries out the reaction pyridoxamine 5'-phosphate + O2 + H2O = pyridoxal 5'-phosphate + H2O2 + NH4(+). The catalysed reaction is pyridoxine 5'-phosphate + O2 = pyridoxal 5'-phosphate + H2O2. It participates in cofactor metabolism; pyridoxal 5'-phosphate salvage; pyridoxal 5'-phosphate from pyridoxamine 5'-phosphate: step 1/1. Its pathway is cofactor metabolism; pyridoxal 5'-phosphate salvage; pyridoxal 5'-phosphate from pyridoxine 5'-phosphate: step 1/1. Catalyzes the oxidation of either pyridoxine 5'-phosphate (PNP) or pyridoxamine 5'-phosphate (PMP) into pyridoxal 5'-phosphate (PLP). The polypeptide is Pyridoxine/pyridoxamine 5'-phosphate oxidase (Anaplasma phagocytophilum (strain HZ)).